The primary structure comprises 332 residues: 2,3-diketo-L-gulonate reductase (332 aa).

The active-site Proton donor is the H44. Residues 168–174 (ITMVDMS), 224–225 (WK), and 304–306 (GHE) each bind NAD(+).

The protein belongs to the LDH2/MDH2 oxidoreductase family. DlgD subfamily. Homodimer.

It localises to the cytoplasm. It carries out the reaction 3-dehydro-L-gulonate + NAD(+) = 2,3-dioxo-L-gulonate + NADH + H(+). The catalysed reaction is 3-dehydro-L-gulonate + NADP(+) = 2,3-dioxo-L-gulonate + NADPH + H(+). In terms of biological role, catalyzes the reduction of 2,3-diketo-L-gulonate in the presence of NADH, to form 3-keto-L-gulonate. This Escherichia coli O8 (strain IAI1) protein is 2,3-diketo-L-gulonate reductase.